Here is a 902-residue protein sequence, read N- to C-terminus: Protein translocase subunit SecA (902 aa).

ATP-binding positions include Gln-87, 105–109 (GEGKT), and Asp-512. The tract at residues 836 to 902 (DVEKVEEQHR…KFKQCCGKLK (67 aa)) is disordered. Positions 840-863 (VEEQHRKSENAPREYQHEEVEHVG) are enriched in basic and acidic residues. Positions 886, 888, 897, and 898 each coordinate Zn(2+).

It belongs to the SecA family. In terms of assembly, monomer and homodimer. Part of the essential Sec protein translocation apparatus which comprises SecA, SecYEG and auxiliary proteins SecDF-YajC and YidC. It depends on Zn(2+) as a cofactor.

It localises to the cell inner membrane. The protein resides in the cytoplasm. The catalysed reaction is ATP + H2O + cellular proteinSide 1 = ADP + phosphate + cellular proteinSide 2.. In terms of biological role, part of the Sec protein translocase complex. Interacts with the SecYEG preprotein conducting channel. Has a central role in coupling the hydrolysis of ATP to the transfer of proteins into and across the cell membrane, serving both as a receptor for the preprotein-SecB complex and as an ATP-driven molecular motor driving the stepwise translocation of polypeptide chains across the membrane. The protein is Protein translocase subunit SecA of Pseudoalteromonas translucida (strain TAC 125).